The primary structure comprises 143 residues: Large ribosomal subunit protein uL13 (143 aa).

This sequence belongs to the universal ribosomal protein uL13 family. As to quaternary structure, part of the 50S ribosomal subunit.

Its function is as follows. This protein is one of the early assembly proteins of the 50S ribosomal subunit, although it is not seen to bind rRNA by itself. It is important during the early stages of 50S assembly. The polypeptide is Large ribosomal subunit protein uL13 (Coprothermobacter proteolyticus (strain ATCC 35245 / DSM 5265 / OCM 4 / BT)).